Reading from the N-terminus, the 38-residue chain is Cytochrome b6-f complex subunit 5 (38 aa).

A helical membrane pass occupies residues 5–25 (LLLGIVLGLIPITLAGLFVAA).

It belongs to the PetG family. In terms of assembly, the 4 large subunits of the cytochrome b6-f complex are cytochrome b6, subunit IV (17 kDa polypeptide, PetD), cytochrome f and the Rieske protein, while the 4 small subunits are PetG, PetL, PetM and PetN. The complex functions as a dimer.

It localises to the cellular thylakoid membrane. Its function is as follows. Component of the cytochrome b6-f complex, which mediates electron transfer between photosystem II (PSII) and photosystem I (PSI), cyclic electron flow around PSI, and state transitions. PetG is required for either the stability or assembly of the cytochrome b6-f complex. This chain is Cytochrome b6-f complex subunit 5, found in Rippkaea orientalis (strain PCC 8801 / RF-1) (Cyanothece sp. (strain PCC 8801)).